The sequence spans 274 residues: Short-chain dehydrogenase/reductase bsc3 (274 aa).

NADP(+)-binding residues include I14, Y170, K174, I203, and T205. Residue Y170 is the Proton donor of the active site. The active-site Lowers pKa of active site Tyr is K174.

It belongs to the short-chain dehydrogenases/reductases (SDR) family.

It participates in mycotoxin biosynthesis. Short-chain dehydrogenase/reductase; part of the gene cluster that mediates the biosynthesis of the diterpene glucoside brassicicene C. In the first step of the brassicicene C biosynthesis, the bifunctional diterpene synthase bsc8 that possesses both prenyl transferase and terpene cyclase activity, converts isopentenyl diphosphate and dimethylallyl diphosphate into geranylgeranyl diphosphate (GGDP) that is further converted into fusicocca-2,10(14)-diene, the first precursor for brassicicene C. Fusicocca-2,10(14)-diene is then substrate of cytochrome P450 monooxygenase bsc1 for hydroxylation at the C-8 position. Oxidation at C-16 position to aldehyde is then catalyzed by the cytochrome P450 monooyxygenase bsc7, yielding fusicocca-2,10(14)-diene-8-beta,16-diol. Follows the isomerization of the double bond and reduction of aldehyde to alcohol catalyzed by the short-chain dehydrogenase/reductase bsc3 to yield the diol compound fusicocca-1,10(14)-diene-8 beta,16-diol. The next step is the oxidation at the C-3 position of fusicocca-2,10(14)-diene-8-beta,16-diol catalyzed by the alpha-ketoglutarate dependent dioxygenase bsc9, to produce a triol compound. Methylation of the hydroxy group at position 16 is performed by the methyltransferase bsc6. 16-O-methylation is followed by oxidation at the C-13 position to ketone and an alkyl shift of the methyl group leads to brassicicene C. Although the probable acetyltransferase bsc4 is included in the gene cluster, no acetylation reactions are necessary for brassicicene C biosynthesis. However, the fact that brassicicene E, which is a structurally related compound having an acetoxy group at position 12, was previously isolated from another strain of A.brassicicola suggests that the ATCC 96836 strain might also produce a small amount of brassicicene E. In Alternaria brassicicola (Dark leaf spot agent), this protein is Short-chain dehydrogenase/reductase bsc3.